The following is a 346-amino-acid chain: Selenide, water dikinase (346 aa).

Residue Sec-16 is part of the active site. A non-standard amino acid (selenocysteine) is located at residue Sec-16. ATP is bound by residues Lys-19 and 47–49; that span reads TAD. Residue Asp-50 coordinates Mg(2+). ATP is bound by residues Asp-67, Asp-90, and 138–140; that span reads GHS. Asp-90 contacts Mg(2+). Mg(2+) is bound at residue Asp-226.

Belongs to the selenophosphate synthase 1 family. Class I subfamily. As to quaternary structure, homodimer. Mg(2+) is required as a cofactor.

The enzyme catalyses hydrogenselenide + ATP + H2O = selenophosphate + AMP + phosphate + 2 H(+). Its function is as follows. Synthesizes selenophosphate from selenide and ATP. This is Selenide, water dikinase from Haemophilus ducreyi (strain 35000HP / ATCC 700724).